Consider the following 76-residue polypeptide: Large ribosomal subunit protein bL31 (76 aa).

Positions 16, 18, 37, and 40 each coordinate Zn(2+).

Belongs to the bacterial ribosomal protein bL31 family. Type A subfamily. As to quaternary structure, part of the 50S ribosomal subunit. Requires Zn(2+) as cofactor.

Binds the 23S rRNA. The sequence is that of Large ribosomal subunit protein bL31 from Solibacter usitatus (strain Ellin6076).